Reading from the N-terminus, the 68-residue chain is Protease A inhibitor 3 (68 aa).

Methionine 1 bears the N-acetylmethionine mark. The span at 1 to 14 shows a compositional bias: polar residues; the sequence is MNTDQQKVSEIFQS. Disordered stretches follow at residues 1–21 and 33–68; these read MNTD…KLQG and MASQ…HKKE. Residues 1 to 32 form an inhibitory domain region; it reads MNTDQQKVSEIFQSSKEKLQGDAKVVSDAFKK. Residues 33–53 show a composition bias toward basic and acidic residues; that stretch reads MASQDKDGKTTDADESEKHNY.

The protein belongs to the protease inhibitor I34 family.

In terms of biological role, specific and potent inhibitor for yeast aspartic protease A (yscA). The proteinase acts as a folding template stabilizing the helical conformation in the inhibitor, which results in the potent and specific blockage of the proteolytic activity. The polypeptide is Protease A inhibitor 3 (PAI3) (Saccharomyces cerevisiae (strain ATCC 204508 / S288c) (Baker's yeast)).